Consider the following 1142-residue polypeptide: Coiled-coil domain-containing protein 40 (1142 aa).

Disordered regions lie at residues 1 to 197 (MAEP…QVLP) and 251 to 274 (PSTEEGAMAERVESEGSDEEAEDE). 2 stretches are compositionally biased toward basic and acidic residues: residues 11–27 (SHPEDGSASEGEKEGNN) and 35–55 (PEKDDGQKGEEAVGSTEHPEE). The segment covering 63–96 (AIEEGEVETEGEAAVEGEEEAVSYGDAESEEEYY) has biased composition (acidic residues). At S252 the chain carries Phosphoserine. Positions 265–274 (EGSDEEAEDE) are enriched in acidic residues. Coiled-coil stretches lie at residues 293–319 (AALKNYLNRQIEKLKLDLQELVVATKQ), 349–470 (HDRH…QAED), 526–627 (QAKS…LRRK), 684–950 (TSSR…LGQL), and 1005–1054 (VRKA…LTRL).

It belongs to the CCDC40 family.

The protein localises to the cytoplasm. It is found in the cell projection. It localises to the cilium. Functionally, required for assembly of dynein regulatory complex (DRC) and inner dynein arm (IDA) complexes, which are responsible for ciliary beat regulation, thereby playing a central role in motility in cilia and flagella. Probably acts together with CCDC39 to form a molecular ruler that determines the 96 nanometer (nm) repeat length and arrangements of components in cilia and flagella. Not required for outer dynein arm complexes assembly. Required for axonemal recruitment of CCDC39. The protein is Coiled-coil domain-containing protein 40 of Homo sapiens (Human).